The sequence spans 530 residues: Na(+)/H(+) antiporter NhaB (530 aa).

The next 12 membrane-spanning stretches (helical) occupy residues 13–33, 34–54, 90–110, 121–141, 145–165, 205–225, 241–261, 306–326, 327–347, 351–371, 455–475, and 481–501; these read FLGK…VINP, LVFF…EFIF, LVAN…IYFM, ILIG…TAAF, FLDA…FYAI, LLIH…VGEP, FIIR…LTCI, GLIA…VGLI, GLSV…HSMG, EEAL…AVII, GQAA…QLSY, and MALP…IFFL.

Belongs to the NhaB Na(+)/H(+) (TC 2.A.34) antiporter family.

It is found in the cell inner membrane. It carries out the reaction 2 Na(+)(in) + 3 H(+)(out) = 2 Na(+)(out) + 3 H(+)(in). Na(+)/H(+) antiporter that extrudes sodium in exchange for external protons. This Aliivibrio fischeri (strain MJ11) (Vibrio fischeri) protein is Na(+)/H(+) antiporter NhaB.